Reading from the N-terminus, the 190-residue chain is MGKSQSKLSQDQLQDLVRSTRFDKKELQQWYKGFFKDCPSGHLNKSEFQKIYKQFFPFGDPSAFAEYVFNVFDADKNGYIDFKEFICALSVTSRGELNDKLIWAFQLYDLDNNGLISYDEMLRIVDAIYKMVGSMVKLPEDEDTPEKRVNKIFNMMDKNKDGQLTLEEFCEGSKRDPTIVSALSLYDGLV.

Gly2 carries N-myristoyl glycine lipidation. 4 EF-hand domains span residues 40 to 58 (SGHL…FFPF), 60 to 95 (DPSA…TSRG), 96 to 131 (ELND…IYKM), and 144 to 179 (TPEK…DPTI). The Ca(2+) site is built by Asp73, Asp75, Asn77, Tyr79, Glu84, Asp109, Asp111, Asn113, Glu120, Asp157, Asn159, Asp161, Gln163, and Glu168.

It belongs to the recoverin family.

The protein localises to the membrane. In terms of biological role, negatively regulates sporulation perhaps by controlling Ca(2+)-dependent desensitization of git3. In Schizosaccharomyces pombe (strain 972 / ATCC 24843) (Fission yeast), this protein is Calcium-binding protein NCS-1 (ncs1).